The primary structure comprises 214 residues: tRNA (guanine-N(7)-)-methyltransferase (214 aa).

The S-adenosyl-L-methionine site is built by aspartate 35, glutamate 60, asparagine 87, and aspartate 113. The active site involves aspartate 113. Residues lysine 117 and aspartate 149 each contribute to the substrate site.

It belongs to the class I-like SAM-binding methyltransferase superfamily. TrmB family.

The enzyme catalyses guanosine(46) in tRNA + S-adenosyl-L-methionine = N(7)-methylguanosine(46) in tRNA + S-adenosyl-L-homocysteine. The protein operates within tRNA modification; N(7)-methylguanine-tRNA biosynthesis. In terms of biological role, catalyzes the formation of N(7)-methylguanine at position 46 (m7G46) in tRNA. The polypeptide is tRNA (guanine-N(7)-)-methyltransferase (Prochlorococcus marinus (strain NATL1A)).